A 922-amino-acid chain; its full sequence is Dual serine/threonine and tyrosine protein kinase (922 aa).

The Protein kinase domain occupies 645 to 899 (PKLGRELGRG…PLLGIVEPSL (255 aa)). Residues 651–659 (LGRGQYGVV) and Lys674 each bind ATP. Asp770 functions as the Proton acceptor in the catalytic mechanism.

It belongs to the protein kinase superfamily. Ser/Thr protein kinase family.

It localises to the cytoplasm. The protein resides in the cell membrane. The protein localises to the apical cell membrane. It is found in the basolateral cell membrane. Its subcellular location is the cell junction. The enzyme catalyses L-seryl-[protein] + ATP = O-phospho-L-seryl-[protein] + ADP + H(+). The catalysed reaction is L-threonyl-[protein] + ATP = O-phospho-L-threonyl-[protein] + ADP + H(+). It catalyses the reaction L-tyrosyl-[protein] + ATP = O-phospho-L-tyrosyl-[protein] + ADP + H(+). Its function is as follows. May act as a positive regulator of ERK phosphorylation downstream of fibroblast growth factor-receptor activation. May induce both caspase-dependent apoptosis and caspase-independent cell death. May play a role in the embryonic development. The polypeptide is Dual serine/threonine and tyrosine protein kinase (Tetraodon nigroviridis (Spotted green pufferfish)).